The chain runs to 282 residues: Bifunctional protein FolD (282 aa).

NADP(+)-binding positions include 167–169 and Ser192; that span reads GRS.

Belongs to the tetrahydrofolate dehydrogenase/cyclohydrolase family. In terms of assembly, homodimer.

It carries out the reaction (6R)-5,10-methylene-5,6,7,8-tetrahydrofolate + NADP(+) = (6R)-5,10-methenyltetrahydrofolate + NADPH. It catalyses the reaction (6R)-5,10-methenyltetrahydrofolate + H2O = (6R)-10-formyltetrahydrofolate + H(+). It participates in one-carbon metabolism; tetrahydrofolate interconversion. Its function is as follows. Catalyzes the oxidation of 5,10-methylenetetrahydrofolate to 5,10-methenyltetrahydrofolate and then the hydrolysis of 5,10-methenyltetrahydrofolate to 10-formyltetrahydrofolate. This chain is Bifunctional protein FolD, found in Acidobacterium capsulatum (strain ATCC 51196 / DSM 11244 / BCRC 80197 / JCM 7670 / NBRC 15755 / NCIMB 13165 / 161).